Consider the following 292-residue polypeptide: Acetylglutamate kinase (292 aa).

Residues 72–73, arginine 94, and asparagine 187 contribute to the substrate site; that span reads GG.

Belongs to the acetylglutamate kinase family. ArgB subfamily.

Its subcellular location is the cytoplasm. It carries out the reaction N-acetyl-L-glutamate + ATP = N-acetyl-L-glutamyl 5-phosphate + ADP. It functions in the pathway amino-acid biosynthesis; L-arginine biosynthesis; N(2)-acetyl-L-ornithine from L-glutamate: step 2/4. Functionally, catalyzes the ATP-dependent phosphorylation of N-acetyl-L-glutamate. The chain is Acetylglutamate kinase from Trichodesmium erythraeum (strain IMS101).